We begin with the raw amino-acid sequence, 124 residues long: Small ribosomal subunit protein uS12 (124 aa).

3-methylthioaspartic acid is present on Asp89. The interval Gln105 to Ser124 is disordered. Positions Lys108–Gly118 are enriched in basic residues.

This sequence belongs to the universal ribosomal protein uS12 family. Part of the 30S ribosomal subunit. Contacts proteins S8 and S17. May interact with IF1 in the 30S initiation complex.

Functionally, with S4 and S5 plays an important role in translational accuracy. In terms of biological role, interacts with and stabilizes bases of the 16S rRNA that are involved in tRNA selection in the A site and with the mRNA backbone. Located at the interface of the 30S and 50S subunits, it traverses the body of the 30S subunit contacting proteins on the other side and probably holding the rRNA structure together. The combined cluster of proteins S8, S12 and S17 appears to hold together the shoulder and platform of the 30S subunit. The protein is Small ribosomal subunit protein uS12 of Mycobacterium sp. (strain JLS).